Reading from the N-terminus, the 1007-residue chain is Mediator of RNA polymerase II transcription subunit 5 (1007 aa).

The protein belongs to the Mediator complex subunit 5 family. Component of the Mediator complex.

It localises to the nucleus. Component of the Mediator complex, a coactivator involved in the regulated transcription of nearly all RNA polymerase II-dependent genes. Mediator functions as a bridge to convey information from gene-specific regulatory proteins to the basal RNA polymerase II transcription machinery. Mediator is recruited to promoters by direct interactions with regulatory proteins and serves as a scaffold for the assembly of a functional preinitiation complex with RNA polymerase II and the general transcription factors. This chain is Mediator of RNA polymerase II transcription subunit 5 (nut1), found in Aspergillus fumigatus (strain ATCC MYA-4609 / CBS 101355 / FGSC A1100 / Af293) (Neosartorya fumigata).